Here is a 48-residue protein sequence, read N- to C-terminus: uncharacterized protein (48 aa).

The disordered stretch occupies residues 1-48 (MSRRMGGGMPKINLSGAIPNNNTSTPSTPTLRSSVSVSSSNSRGLFLA). Positions 20–48 (NNNTSTPSTPTLRSSVSVSSSNSRGLFLA) are enriched in low complexity.

This is an uncharacterized protein from Dictyostelium discoideum (Social amoeba).